Here is a 222-residue protein sequence, read N- to C-terminus: CCA-adding enzyme (222 aa).

Residues S50 and K53 each coordinate ATP. 2 residues coordinate CTP: S50 and K53. D61, D63, and D112 together coordinate Mg(2+). 3 residues coordinate ATP: H135, K155, and Y164. The CTP site is built by H135, K155, and Y164.

It belongs to the tRNA nucleotidyltransferase/poly(A) polymerase family. Archaeal CCA-adding enzyme subfamily. In terms of assembly, homodimer. Requires Mg(2+) as cofactor.

It catalyses the reaction a tRNA precursor + 2 CTP + ATP = a tRNA with a 3' CCA end + 3 diphosphate. The catalysed reaction is a tRNA with a 3' CCA end + 2 CTP + ATP = a tRNA with a 3' CCACCA end + 3 diphosphate. Functionally, catalyzes the addition and repair of the essential 3'-terminal CCA sequence in tRNAs without using a nucleic acid template. Adds these three nucleotides in the order of C, C, and A to the tRNA nucleotide-73, using CTP and ATP as substrates and producing inorganic pyrophosphate. tRNA 3'-terminal CCA addition is required both for tRNA processing and repair. Also involved in tRNA surveillance by mediating tandem CCA addition to generate a CCACCA at the 3' terminus of unstable tRNAs. While stable tRNAs receive only 3'-terminal CCA, unstable tRNAs are marked with CCACCA and rapidly degraded. The sequence is that of CCA-adding enzyme from Thermoplasma acidophilum.